Consider the following 219-residue polypeptide: Dehydration-responsive element-binding protein 1E (219 aa).

A compositionally biased stretch (low complexity) spans 1 to 19 (MEWAYYGSGYSSSGTPSPV). The disordered stretch occupies residues 1-44 (MEWAYYGSGYSSSGTPSPVGGDGDEDSYMTVSSAPPKRRAGRTK). The segment at residues 52–109 (VYKGVRSRNPGRWVCEVREPHGKQRIWLGTFETAEMAARAHDVAAMALRGRAACLNFA) is a DNA-binding region (AP2/ERF).

This sequence belongs to the AP2/ERF transcription factor family. ERF subfamily.

It localises to the nucleus. Its function is as follows. Transcriptional activator that binds specifically to the DNA sequence 5'-[AG]CCGAC-3'. Binding to the C-repeat/DRE element mediates high salinity- and dehydration-inducible transcription. The protein is Dehydration-responsive element-binding protein 1E (DREB1E) of Oryza sativa subsp. indica (Rice).